A 231-amino-acid polypeptide reads, in one-letter code: GDSL lipase Rv0518 (231 aa).

An N-terminal signal peptide occupies residues 1-20 (MSRPGTYVIGLTLLVGLVVG). Catalysis depends on serine 46, which acts as the Nucleophile. The active-site Proton donor is aspartate 205. The Proton acceptor role is filled by histidine 208.

The protein belongs to the 'GDSL' lipolytic enzyme family.

Its subcellular location is the secreted. It is found in the cell wall. The protein localises to the extracellular space. It catalyses the reaction a fatty acid ester + H2O = an aliphatic alcohol + a fatty acid + H(+). The enzyme catalyses decanoate ester + H2O = decanoate + an aliphatic alcohol + H(+). It carries out the reaction an octanoate ester + H2O = an aliphatic alcohol + octanoate + H(+). The catalysed reaction is a dodecanoate ester + H2O = an aliphatic alcohol + dodecanoate + H(+). It catalyses the reaction a tetradecanoate ester + H2O = an aliphatic alcohol + tetradecanoate + H(+). With respect to regulation, activity is inhibited by the serine modifier phenylmethylsulfonyl fluoride (PMSF). GDSL lipase that catalyzes the hydrolysis of p-nitrophenyl (pNP) esters. pNP-decanoate (C10) is the preferred substrate. It can also use pNP-octanoate (C8), pNP-dodecanoate (C12) and pNP-tetradecanoate (C14). Has lower activity with pNP-butyrate (C4), pNP-palmitate (C16) and pNP-stearate (C18). Does not show phospholipase A1 activity. Might help bacteria to utilize available lipids for its growth as well as provide resistance to various intracellular stresses by cell wall modulation resulting in enhanced intracellular survival. In Mycobacterium tuberculosis (strain ATCC 25618 / H37Rv), this protein is GDSL lipase Rv0518.